Here is a 382-residue protein sequence, read N- to C-terminus: D-galactonate dehydratase (382 aa).

Residue Asp183 coordinates Mg(2+). His185 (proton donor) is an active-site residue. Mg(2+) is bound by residues Glu209 and Glu235. His285 serves as the catalytic Proton acceptor.

This sequence belongs to the mandelate racemase/muconate lactonizing enzyme family. GalD subfamily. Mg(2+) is required as a cofactor.

It catalyses the reaction D-galactonate = 2-dehydro-3-deoxy-D-galactonate + H2O. The protein operates within carbohydrate acid metabolism; D-galactonate degradation; D-glyceraldehyde 3-phosphate and pyruvate from D-galactonate: step 1/3. Functionally, catalyzes the dehydration of D-galactonate to 2-keto-3-deoxy-D-galactonate. In Salmonella choleraesuis (strain SC-B67), this protein is D-galactonate dehydratase.